The chain runs to 150 residues: Large ribosomal subunit protein uL13 (150 aa).

Positions 130-150 (EHPHGAQQPQPYQLNPSASIK) are disordered. Positions 136–150 (QQPQPYQLNPSASIK) are enriched in polar residues.

The protein belongs to the universal ribosomal protein uL13 family. In terms of assembly, part of the 50S ribosomal subunit.

In terms of biological role, this protein is one of the early assembly proteins of the 50S ribosomal subunit, although it is not seen to bind rRNA by itself. It is important during the early stages of 50S assembly. This chain is Large ribosomal subunit protein uL13, found in Synechococcus sp. (strain RCC307).